The following is a 638-amino-acid chain: Threonine--tRNA ligase (638 aa).

Positions 1 to 61 constitute a TGS domain; the sequence is MPVITLPDGS…SVDGKLQIIT (61 aa). The segment at 243-534 is catalytic; it reads DHRKIGKTQD…LTEEYAGFFP (292 aa). Positions 334, 385, and 511 each coordinate Zn(2+).

Belongs to the class-II aminoacyl-tRNA synthetase family. Homodimer. The cofactor is Zn(2+).

Its subcellular location is the cytoplasm. It catalyses the reaction tRNA(Thr) + L-threonine + ATP = L-threonyl-tRNA(Thr) + AMP + diphosphate + H(+). In terms of biological role, catalyzes the attachment of threonine to tRNA(Thr) in a two-step reaction: L-threonine is first activated by ATP to form Thr-AMP and then transferred to the acceptor end of tRNA(Thr). Also edits incorrectly charged L-seryl-tRNA(Thr). The protein is Threonine--tRNA ligase of Hamiltonella defensa subsp. Acyrthosiphon pisum (strain 5AT).